The primary structure comprises 190 residues: LOB domain-containing protein 1 (190 aa).

Residues 1–11 (MESKSDASVAT) are compositionally biased toward polar residues. Positions 1–27 (MESKSDASVATTPIISSSSSPPPSLSP) are disordered. The 102-residue stretch at 32–133 (SPCAACKILR…AQLAKAQVEM (102 aa)) folds into the LOB domain.

The protein belongs to the LOB domain-containing protein family. As to expression, expressed in young shoots, roots, stems, leaves and flowers.

The polypeptide is LOB domain-containing protein 1 (LBD1) (Arabidopsis thaliana (Mouse-ear cress)).